Reading from the N-terminus, the 536-residue chain is Glutamyl-tRNA(Gln) amidotransferase subunit B, mitochondrial (536 aa).

Belongs to the GatB/GatE family. GatB subfamily. In terms of assembly, subunit of the heterotrimeric GatFAB amidotransferase (AdT) complex, composed of A, B and F subunits.

The protein resides in the mitochondrion. It carries out the reaction L-glutamyl-tRNA(Gln) + L-glutamine + ATP + H2O = L-glutaminyl-tRNA(Gln) + L-glutamate + ADP + phosphate + H(+). In terms of biological role, allows the formation of correctly charged Gln-tRNA(Gln) through the transamidation of misacylated Glu-tRNA(Gln) in the mitochondria. The reaction takes place in the presence of glutamine and ATP through an activated gamma-phospho-Glu-tRNA(Gln). This Vanderwaltozyma polyspora (strain ATCC 22028 / DSM 70294 / BCRC 21397 / CBS 2163 / NBRC 10782 / NRRL Y-8283 / UCD 57-17) (Kluyveromyces polysporus) protein is Glutamyl-tRNA(Gln) amidotransferase subunit B, mitochondrial.